We begin with the raw amino-acid sequence, 476 residues long: Cytochrome c oxidase subunit 1 (476 aa).

The helical transmembrane segment at 19–39 (LYYLWFSFLFGIYGFLLSVIL) threads the bilayer. Glu-42 contacts Ca(2+). The next 8 helical transmembrane spans lie at 61 to 81 (MIFT…GLFG), 105 to 125 (ISLL…AAEF), 144 to 164 (LSPV…IASI), 194 to 214 (LIIT…GVLM), 240 to 260 (LLWF…FGII), 278 to 298 (MILA…HHMY), 309 to 329 (FFTS…FNWL), and 345 to 365 (LLSL…VILG). His-66 contacts Fe(II)-heme a. His-246 lines the Cu cation pocket. Residues 246–250 (HPEVY) constitute a cross-link (1'-histidyl-3'-tyrosine (His-Tyr)). Tyr-250 contributes to the O2 binding site. Positions 295 and 296 each coordinate Cu cation. Residues His-374 and Asp-375 each contribute to the Mg(2+) site. 2 helical membrane passes run 379 to 399 (VIAH…FTSV) and 415 to 435 (TIIV…FLPM). His-382 lines the heme a3 pocket. Residue His-384 participates in Fe(II)-heme a binding. Pro-448 contributes to the Ca(2+) binding site. Residues 455-475 (NGWNMICSIGSTMTLFGLLIF) traverse the membrane as a helical segment.

This sequence belongs to the heme-copper respiratory oxidase family. In terms of assembly, component of the cytochrome c oxidase (complex IV, CIV), a multisubunit enzyme composed of a catalytic core of 3 subunits and several supernumerary subunits. The complex exists as a monomer or a dimer and forms supercomplexes (SCs) in the inner mitochondrial membrane with ubiquinol-cytochrome c oxidoreductase (cytochrome b-c1 complex, complex III, CIII). The cofactor is heme. Cu cation is required as a cofactor.

Its subcellular location is the mitochondrion inner membrane. The enzyme catalyses 4 Fe(II)-[cytochrome c] + O2 + 8 H(+)(in) = 4 Fe(III)-[cytochrome c] + 2 H2O + 4 H(+)(out). The protein operates within energy metabolism; oxidative phosphorylation. In terms of biological role, component of the cytochrome c oxidase, the last enzyme in the mitochondrial electron transport chain which drives oxidative phosphorylation. The respiratory chain contains 3 multisubunit complexes succinate dehydrogenase (complex II, CII), ubiquinol-cytochrome c oxidoreductase (cytochrome b-c1 complex, complex III, CIII) and cytochrome c oxidase (complex IV, CIV), that cooperate to transfer electrons derived from NADH and succinate to molecular oxygen, creating an electrochemical gradient over the inner membrane that drives transmembrane transport and the ATP synthase. Cytochrome c oxidase is the component of the respiratory chain that catalyzes the reduction of oxygen to water. Electrons originating from reduced cytochrome c in the intermembrane space (IMS) are transferred via the dinuclear copper A center (CU(A)) of subunit 2 and heme A of subunit 1 to the active site in subunit 1, a binuclear center (BNC) formed by heme A3 and copper B (CU(B)). The BNC reduces molecular oxygen to 2 water molecules using 4 electrons from cytochrome c in the IMS and 4 protons from the mitochondrial matrix. In Plasmodium chabaudi, this protein is Cytochrome c oxidase subunit 1 (COI).